The sequence spans 616 residues: Chaperone protein HscA (616 aa).

This sequence belongs to the heat shock protein 70 family.

In terms of biological role, chaperone involved in the maturation of iron-sulfur cluster-containing proteins. Has a low intrinsic ATPase activity which is markedly stimulated by HscB. Involved in the maturation of IscU. This is Chaperone protein HscA from Escherichia coli (strain SMS-3-5 / SECEC).